We begin with the raw amino-acid sequence, 132 residues long: U11/U12 small nuclear ribonucleoprotein 25 kDa protein (132 aa).

Residues 41-132 (MTVRVCKMDG…VSFIKKLRQK (92 aa)) form the Ubiquitin-like domain.

In terms of assembly, component of the U11/U12 snRNPs that are part of the U12-type spliceosome.

It is found in the nucleus. This chain is U11/U12 small nuclear ribonucleoprotein 25 kDa protein (SNRNP25), found in Homo sapiens (Human).